The chain runs to 822 residues: Penicillin-binding protein 1A (822 aa).

Over Met1–Lys5 the chain is Cytoplasmic. The chain crosses the membrane as a helical; Signal-anchor for type II membrane protein span at residues Phe6–Tyr26. At Leu27–Phe822 the chain is on the periplasmic side. The transglycosylase stretch occupies residues Leu48–Thr216. The active-site Proton donor; for transglycosylase activity is the Glu86. A transpeptidase region spans residues Ile403 to Arg744. Residue Ser461 is the Acyl-ester intermediate; for transpeptidase activity of the active site. 2 disordered regions span residues Ala614–Thr654 and Lys790–Phe822. Positions Pro812 to Phe822 are enriched in acidic residues.

In the N-terminal section; belongs to the glycosyltransferase 51 family. The protein in the C-terminal section; belongs to the transpeptidase family.

Its subcellular location is the cell inner membrane. The enzyme catalyses [GlcNAc-(1-&gt;4)-Mur2Ac(oyl-L-Ala-gamma-D-Glu-L-Lys-D-Ala-D-Ala)](n)-di-trans,octa-cis-undecaprenyl diphosphate + beta-D-GlcNAc-(1-&gt;4)-Mur2Ac(oyl-L-Ala-gamma-D-Glu-L-Lys-D-Ala-D-Ala)-di-trans,octa-cis-undecaprenyl diphosphate = [GlcNAc-(1-&gt;4)-Mur2Ac(oyl-L-Ala-gamma-D-Glu-L-Lys-D-Ala-D-Ala)](n+1)-di-trans,octa-cis-undecaprenyl diphosphate + di-trans,octa-cis-undecaprenyl diphosphate + H(+). It carries out the reaction Preferential cleavage: (Ac)2-L-Lys-D-Ala-|-D-Ala. Also transpeptidation of peptidyl-alanyl moieties that are N-acyl substituents of D-alanine.. It functions in the pathway cell wall biogenesis; peptidoglycan biosynthesis. Functionally, cell wall formation. Synthesis of cross-linked peptidoglycan from the lipid intermediates. The enzyme has a penicillin-insensitive transglycosylase N-terminal domain (formation of linear glycan strands) and a penicillin-sensitive transpeptidase C-terminal domain (cross-linking of the peptide subunits). The protein is Penicillin-binding protein 1A (mrcA) of Pseudomonas aeruginosa (strain ATCC 15692 / DSM 22644 / CIP 104116 / JCM 14847 / LMG 12228 / 1C / PRS 101 / PAO1).